Consider the following 336-residue polypeptide: N-acetylornithine carbamoyltransferase (336 aa).

Carbamoyl phosphate contacts are provided by residues 49 to 52 (SMRT), Trp-77, and Arg-112. Glu-144 lines the N(2)-acetyl-L-ornithine pocket. 148-151 (HPCQ) provides a ligand contact to carbamoyl phosphate. The N(2)-acetyl-L-ornithine site is built by Lys-252 and Leu-295. 294–295 (CL) is a carbamoyl phosphate binding site. Lys-302 is modified (N6-carboxylysine). Carbamoyl phosphate is bound at residue Arg-322.

The protein belongs to the aspartate/ornithine carbamoyltransferase superfamily. AOTCase family. Homotrimer.

The protein localises to the cytoplasm. The catalysed reaction is N(2)-acetyl-L-ornithine + carbamoyl phosphate = N(2)-acetyl-L-citrulline + phosphate + H(+). It functions in the pathway amino-acid biosynthesis; L-arginine biosynthesis. Its activity is regulated as follows. Carboxylation at Lys-302 increases the catalytic activity of the enzyme. Catalyzes the transfer of the carbamoyl group from carbamoyl phosphate to the delta-amino group of N(2)-acetyl-L-ornithine to produce N(2)-acetyl-L-citrulline. This is a step in an alternative arginine biosynthesis pathway. The enzyme has no activity with ornithine. In Xylella fastidiosa (strain Temecula1 / ATCC 700964), this protein is N-acetylornithine carbamoyltransferase.